A 353-amino-acid chain; its full sequence is Lipase-specific foldase (353 aa).

Topologically, residues 1 to 19 (MAQADRPARGGLAARPMRG) are cytoplasmic. A helical transmembrane segment spans residues 20–40 (ASFALAGLVACAACAAVVLWL). The Periplasmic portion of the chain corresponds to 41 to 353 (RPAAPSPAPA…AASLDRGAGG (313 aa)).

It belongs to the lipase chaperone family. As to quaternary structure, monomer. Interacts with lipase (lip).

It localises to the cell inner membrane. In terms of biological role, involved in the folding of the extracellular lipase (lip) during its passage through the periplasm. This is Lipase-specific foldase from Burkholderia plantarii.